We begin with the raw amino-acid sequence, 708 residues long: Lactotransferrin (708 aa).

The N-terminal stretch at 1–19 (MKLFVPALLSLGALGLCLA) is a signal peptide. 2 Transferrin-like domains span residues 25–352 (VRWC…NLRE) and 364–693 (VVWC…NLKK). Intrachain disulfides connect cysteine 28–cysteine 64 and cysteine 38–cysteine 55. Aspartate 79 contributes to the Fe(3+) binding site. The active site involves lysine 92. Residue tyrosine 111 participates in Fe(3+) binding. Intrachain disulfides connect cysteine 134–cysteine 217, cysteine 176–cysteine 192, cysteine 179–cysteine 202, cysteine 189–cysteine 200, and cysteine 250–cysteine 264. 3 residues coordinate hydrogencarbonate: arginine 140, alanine 142, and glycine 143. Tyrosine 211 contacts Fe(3+). N-linked (GlcNAc...) (high mannose) asparagine glycosylation occurs at asparagine 252. Histidine 272 is a binding site for Fe(3+). Serine 278 acts as the Nucleophile in catalysis. A glycan (N-linked (GlcNAc...) asparagine) is linked at asparagine 300. 2 disulfides stabilise this stretch: cysteine 367/cysteine 399 and cysteine 377/cysteine 390. Asparagine 387 carries N-linked (GlcNAc...) (complex) asparagine; alternate glycosylation. Asparagine 387 carries N-linked (GlcNAc...) (high mannose) asparagine; alternate glycosylation. Asparagine 387 carries N-linked (GlcNAc...) (hybrid) asparagine; alternate glycosylation. 2 residues coordinate Fe(3+): aspartate 414 and tyrosine 452. 8 cysteine pairs are disulfide-bonded: cysteine 424–cysteine 703, cysteine 444–cysteine 666, cysteine 476–cysteine 551, cysteine 500–cysteine 694, cysteine 510–cysteine 524, cysteine 521–cysteine 534, cysteine 592–cysteine 606, and cysteine 644–cysteine 649. Residues threonine 478, arginine 482, alanine 484, and glycine 485 each coordinate hydrogencarbonate. A glycan (N-linked (GlcNAc...) (complex) asparagine; alternate) is linked at asparagine 495. A glycan (N-linked (GlcNAc...) (high mannose) asparagine; alternate) is linked at asparagine 495. A glycan (N-linked (GlcNAc...) (hybrid) asparagine; alternate) is linked at asparagine 495. Tyrosine 545 provides a ligand contact to Fe(3+). Asparagine 564 carries an N-linked (GlcNAc...) (high mannose) asparagine glycan. Residue histidine 614 participates in Fe(3+) binding.

Belongs to the transferrin family. As to quaternary structure, monomer. Found in a complex with LTF, CLU, EPPIN and SEMG1. Found in a complex with MPO and LTF; interacts directly with CP, allows Fe(3+) incorporation into LTF and activation of CP ferroxidase activity. Poly-N-acetyllactosaminic carbohydrate moiety seems to be needed for TLR4 activation.

Its subcellular location is the secreted. It is found in the cytoplasmic granule. Its function is as follows. Transferrins are iron binding transport proteins which can bind two Fe(3+) ions in association with the binding of an anion, usually bicarbonate. In terms of biological role, major iron-binding and multifunctional protein found in exocrine fluids such as breast milk and mucosal secretions. Has antimicrobial activity, which depends on the extracellular cation concentration. Antimicrobial properties include bacteriostasis, which is related to its ability to sequester free iron and thus inhibit microbial growth, as well as direct bactericidal properties leading to the release of lipopolysaccharides from the bacterial outer membrane. Can also prevent bacterial biofilm development in P.aeruginosa infection. Has weak antifungal activity against C.albicans. Has anabolic, differentiating and anti-apoptotic effects on osteoblasts and can also inhibit osteoclastogenesis, possibly playing a role in the regulation of bone growth. Promotes binding of species C adenoviruses to epithelial cells, promoting adenovirus infection. Can inhibit papillomavirus infections. Stimulates the TLR4 signaling pathway leading to NF-kappa-B activation and subsequent pro-inflammatory cytokine production while also interfering with the lipopolysaccharide (LPS)-stimulated TLR4 signaling. Inhibits neutrophil granulocyte migration to sites of apoptosis, when secreted by apoptotic cells. Stimulates VEGFA-mediated endothelial cell migration and proliferation. Binds heparin, chondroitin sulfate and possibly other glycosaminoglycans (GAGs). Also binds specifically to pneumococcal surface protein A (PspA), the lipid A portion of bacterial lipopolysaccharide (LPS), lysozyme and DNA. Lactoferricin binds to the bacterial surface and is crucial for the bactericidal functions. Has some antiviral activity against papillomavirus infection. N-terminal region shows strong antifungal activity against C.albicans. Contains two BBXB heparin-binding consensus sequences that appear to form the predominate functional GAG-binding site. Functionally, the lactotransferrin transferrin-like domain 1 functions as a serine protease of the peptidase S60 family that cuts arginine rich regions. This function contributes to the antimicrobial activity. Shows a preferential cleavage at -Arg-Ser-Arg-Arg-|- and -Arg-Arg-Ser-Arg-|-, and of Z-Phe-Arg-|-aminomethylcoumarin sites. This Capra hircus (Goat) protein is Lactotransferrin (LTF).